The chain runs to 263 residues: TPR repeat-containing protein DDB_G0285095 (263 aa).

Over residues 1–25 (MGCCGSKEKYNGEDVPKSQRLENRP) the composition is skewed to basic and acidic residues. Positions 1-62 (MGCCGSKEKY…ASASQQNNPT (62 aa)) are disordered. TPR repeat units follow at residues 87–120 (SDLLAQYGVLLSMEGKNKEAEESLRKAVEVDTDN), 121–154 (SRAWQAYGEFLERTNNPKKAKEVYGEAYKHAAPK), and 162–195 (SSLLLSYAIFIQKSGEIDKAEKLYKRIVTSGARS).

This is TPR repeat-containing protein DDB_G0285095 from Dictyostelium discoideum (Social amoeba).